Reading from the N-terminus, the 134-residue chain is Terepressin/terephysin (134 aa).

The first 33 residues, 1–33 (MKCSVLQMSRLSWTACVLLLPLLLLTLQGGVQG), serve as a signal peptide directing secretion. Cys34 and Cys39 form a disulfide bridge. The propeptide occupies 44-50 (KRAVDSV). Disulfide bonds link Cys56-Cys100, Cys59-Cys73, Cys67-Cys90, Cys74-Cys80, Cys107-Cys121, Cys115-Cys133, and Cys122-Cys127.

Belongs to the vasopressin/oxytocin family. Post-translationally, contains 7 disulfide bonds. Expressed by the venom duct.

The protein resides in the secreted. The chain is Terepressin/terephysin from Terebra anilis (Auger snail).